The following is a 513-amino-acid chain: Putative ADP-ribosyl glycohydrolase L444 (513 aa).

Residues 1 to 23 are compositionally biased toward basic and acidic residues; it reads MSDKIQSRESKTTKPTKTEKISD. The segment at 1-33 is disordered; the sequence is MSDKIQSRESKTTKPTKTEKISDKSGNLSQVKS. Over residues 24–33 the composition is skewed to polar residues; sequence KSGNLSQVKS.

This sequence belongs to the ADP-ribosylglycohydrolase family.

In Acanthamoeba polyphaga mimivirus (APMV), this protein is Putative ADP-ribosyl glycohydrolase L444.